The primary structure comprises 353 residues: 2-Hydroxyacid oxidase 2 (353 aa).

The FMN hydroxy acid dehydrogenase domain occupies 2–353 (PLVCLADFKA…SPDLIQFSRL (352 aa)). Residues 77–79 (PTA), serine 106, and glutamine 128 each bind FMN. Tyrosine 130 provides a ligand contact to a 2-oxocarboxylate. Phosphoserine is present on serine 133. FMN is bound at residue threonine 156. Arginine 165 contacts a 2-oxocarboxylate. Lysine 224 lines the FMN pocket. The active-site Proton acceptor is histidine 248. A 2-oxocarboxylate is bound at residue arginine 251. FMN-binding positions include 279-283 (DGGVR) and 302-303 (GR). The Microbody targeting signal signature appears at 351–353 (SRL).

Belongs to the FMN-dependent alpha-hydroxy acid dehydrogenase family. As to quaternary structure, homotetramer. Could also form homooctamer. It depends on FMN as a cofactor. In terms of tissue distribution, expressed in kidney.

Its subcellular location is the peroxisome. The catalysed reaction is a (2S)-2-hydroxycarboxylate + O2 = a 2-oxocarboxylate + H2O2. It catalyses the reaction 2-hydroxyoctanoate + O2 = 2-oxooctanoate + H2O2. The enzyme catalyses 2-hydroxyhexadecanoate + O2 = 2-oxohexadecanoate + H2O2. It carries out the reaction 2-hydroxyhexanoate + O2 = 2-oxohexanoate + H2O2. The catalysed reaction is mandelate + O2 = phenylglyoxylate + H2O2. Its activity is regulated as follows. Is inhibited in vitro by CCPST (4-carboxy-5-(4-chlorophenyl)sulfanyl-1,2,3-thiadiazole). Oxidase that catalyzes the oxidation of medium and long chain hydroxyacids such as 2-hydroxyhexadecanoate, 2-hydroxyoctanoate, 2-hydroxyhexanoate and 2-hydroxybutanoate, to the correspondong 2-oxoacids. Its role in the oxidation of 2-hydroxy fatty acids may contribute to the general pathway of fatty acid alpha-oxidation. Can also use mandelate as substrate. Active in vitro with the artificial electron acceptor 2,6-dichlorophenolindophenol (DCIP), but O2 is believed to be the physiological electron acceptor, leading to the production of H2O2. This chain is 2-Hydroxyacid oxidase 2 (Hao2), found in Rattus norvegicus (Rat).